The sequence spans 157 residues: SsrA-binding protein (157 aa).

The disordered stretch occupies residues His-134–Gly-157. Residues Asp-135–Arg-151 are compositionally biased toward basic and acidic residues.

The protein belongs to the SmpB family.

The protein resides in the cytoplasm. Its function is as follows. Required for rescue of stalled ribosomes mediated by trans-translation. Binds to transfer-messenger RNA (tmRNA), required for stable association of tmRNA with ribosomes. tmRNA and SmpB together mimic tRNA shape, replacing the anticodon stem-loop with SmpB. tmRNA is encoded by the ssrA gene; the 2 termini fold to resemble tRNA(Ala) and it encodes a 'tag peptide', a short internal open reading frame. During trans-translation Ala-aminoacylated tmRNA acts like a tRNA, entering the A-site of stalled ribosomes, displacing the stalled mRNA. The ribosome then switches to translate the ORF on the tmRNA; the nascent peptide is terminated with the 'tag peptide' encoded by the tmRNA and targeted for degradation. The ribosome is freed to recommence translation, which seems to be the essential function of trans-translation. This chain is SsrA-binding protein, found in Nitrobacter hamburgensis (strain DSM 10229 / NCIMB 13809 / X14).